Consider the following 151-residue polypeptide: Cytochrome c-type biogenesis protein CcmE (151 aa).

At methionine 1–arginine 8 the chain is on the cytoplasmic side. Residues leucine 9 to alanine 29 traverse the membrane as a helical; Signal-anchor for type II membrane protein segment. Over leucine 30–proline 151 the chain is Periplasmic. Heme is bound by residues histidine 124 and tyrosine 128.

This sequence belongs to the CcmE/CycJ family.

It localises to the cell inner membrane. Its function is as follows. Heme chaperone required for the biogenesis of c-type cytochromes. Transiently binds heme delivered by CcmC and transfers the heme to apo-cytochromes in a process facilitated by CcmF and CcmH. This chain is Cytochrome c-type biogenesis protein CcmE, found in Pseudomonas putida (strain ATCC 700007 / DSM 6899 / JCM 31910 / BCRC 17059 / LMG 24140 / F1).